We begin with the raw amino-acid sequence, 757 residues long: Centrosomal protein of 68 kDa (757 aa).

Composition is skewed to basic and acidic residues over residues 1 to 17 and 86 to 96; these read MALGEEKAEAEASEDTK and ANREPVAERSE. Disordered regions lie at residues 1 to 47, 67 to 158, 192 to 259, 311 to 480, 509 to 551, and 597 to 618; these read MALG…RLEA, WIGT…PSLA, QPSS…GGDA, PGPQ…ESDD, PTGD…SGDP, and LDRWPFSDPDVEGQLPRKGGEQ. Polar residues predominate over residues 125–144; sequence LSSSEEFPQTLSLPRTTTIC. Composition is skewed to low complexity over residues 192–206 and 224–240; these read QPSSCSISASSTGSS and VSSSLEPVVPQEPSSVV. At serine 332 the chain carries Phosphoserine; by PLK1. The span at 339 to 355 shows a compositional bias: polar residues; it reads FSVSPASTLKSPTNVSP. Basic and acidic residues-rich tracts occupy residues 405–432 and 439–456; these read GSRDARWERREPALRGAKDRLTIGKHLD and RTRDRGWPSPRPEREKRT. Over residues 457–467 the composition is skewed to polar residues; sequence SQSARRPTCTE. Serine 472 and serine 478 each carry phosphoserine. Residues 524–543 show a composition bias toward low complexity; sequence SDGPASFPSSSSQSQLPPGA.

As to quaternary structure, interacts with CNTLN; the interaction recruits CEP68 to the centrosome. Interacts with the SCF(FBXW11) complex which contains SKP1, CUL1 and FBXW11; the interaction is probably mediated by FBXW11 and the complex also contains CDK5RAP2 and PCNT. Also interacts with F-box protein BTRC. Interacts with serine/threonine-protein kinase PLK1; the interaction leads to phosphorylation of CEP68 and its subsequent degradation. Interacts with NEK2; the interaction leads to phosphorylation of CEP68. In terms of processing, phosphorylation by PLK1 is required for binding to BTRC in prometaphase. Phosphorylated directly or indirectly by NEK2. NEK2-mediated phosphorylation promotes CEP68 dissociation from the centrosome and its degradation at the onset of mitosis. Post-translationally, ubiquitinated and targeted for proteasomal degradation in early mitosis by the SCF(BTRC) and/or SCF(FBXW11) E3 ubiquitin-protein ligase complexes. Degradation is complete by prometaphase and is required for removal of CDK5RAP2 from the peripheral pericentriolar material and subsequent centriole separation.

Its subcellular location is the cytoplasm. It localises to the cytoskeleton. The protein localises to the microtubule organizing center. It is found in the centrosome. Its function is as follows. Involved in maintenance of centrosome cohesion, probably as part of a linker structure which prevents centrosome splitting. Required for localization of CDK5RAP2 to the centrosome during interphase. Contributes to CROCC/rootletin filament formation. This is Centrosomal protein of 68 kDa (CEP68) from Homo sapiens (Human).